We begin with the raw amino-acid sequence, 395 residues long: Beta-1,4-galactosyltransferase 3 (395 aa).

The Cytoplasmic portion of the chain corresponds to 1 to 10 (MLRRLLERPC). The helical; Signal-anchor for type II membrane protein transmembrane segment at 11 to 31 (TLALLVGSQLAVMMYLSLGGF) threads the bilayer. The Lumenal portion of the chain corresponds to 32-395 (RSLSALFGRD…ANHTAPHGSH (364 aa)). Asn-57 is a glycosylation site (N-linked (GlcNAc...) asparagine). A disulfide bond links Cys-79 and Cys-121. 132 to 136 (PHRAR) contacts UDP-alpha-D-galactose. A glycan (N-linked (GlcNAc...) asparagine) is linked at Asn-168. UDP-alpha-D-galactose contacts are provided by residues 171 to 173 (FNR), 198 to 199 (VD), Tyr-228, and Trp-260. A disulfide bridge links Cys-192 with Cys-211. Asp-199 provides a ligand contact to Mn(2+). 262–265 (GEDD) is an N-acetyl-D-glucosamine binding site. His-293 contributes to the Mn(2+) binding site. Residue 293–295 (HRG) participates in UDP-alpha-D-galactose binding. Arg-305 serves as a coordination point for N-acetyl-D-glucosamine. Residues Asn-339 and Asn-387 are each glycosylated (N-linked (GlcNAc...) asparagine). A disordered region spans residues 341–395 (TADIGTDPRGPRAPSGPRYPPGSSQAFRQEMLQRRPPARPGPLPTANHTAPHGSH).

This sequence belongs to the glycosyltransferase 7 family. It depends on Mn(2+) as a cofactor.

The protein resides in the golgi apparatus. It localises to the golgi stack membrane. The catalysed reaction is an N-acetyl-beta-D-glucosaminyl derivative + UDP-alpha-D-galactose = a beta-D-galactosyl-(1-&gt;4)-N-acetyl-beta-D-glucosaminyl derivative + UDP + H(+). It catalyses the reaction N-acetyl-D-glucosamine + UDP-alpha-D-galactose = beta-D-galactosyl-(1-&gt;4)-N-acetyl-D-glucosamine + UDP + H(+). It carries out the reaction a beta-D-GlcNAc-(1-&gt;3)-beta-D-Gal-(1-&gt;4)-beta-D-Glc-(1&lt;-&gt;1)-Cer(d18:1(4E)) + UDP-alpha-D-galactose = a neolactoside nLc4Cer(d18:1(4E)) + UDP + H(+). The enzyme catalyses a beta-D-glucosylceramide + UDP-alpha-D-galactose = a beta-D-galactosyl-(1-&gt;4)-beta-D-glucosyl-(1&lt;-&gt;1)-ceramide + UDP + H(+). The catalysed reaction is a neolactoside IV(3)-beta-GlcNAc-nLc4Cer + UDP-alpha-D-galactose = a neolactoside nLc6Cer + UDP + H(+). It participates in protein modification; protein glycosylation. In terms of biological role, responsible for the synthesis of complex-type N-linked oligosaccharides in many glycoproteins as well as the carbohydrate moieties of glycolipids. This Rattus norvegicus (Rat) protein is Beta-1,4-galactosyltransferase 3.